Consider the following 261-residue polypeptide: Orotidine 5'-phosphate decarboxylase (261 aa).

Substrate is bound by residues Asp34, 56-58 (KTH), 88-97 (DRKFADIGNT), Tyr214, and Arg232. Residue Lys90 is the Proton donor of the active site.

It belongs to the OMP decarboxylase family.

The catalysed reaction is orotidine 5'-phosphate + H(+) = UMP + CO2. It participates in pyrimidine metabolism; UMP biosynthesis via de novo pathway; UMP from orotate: step 2/2. The polypeptide is Orotidine 5'-phosphate decarboxylase (URA3) (Kodamaea ohmeri (Yeast)).